Consider the following 558-residue polypeptide: Glucose-6-phosphate isomerase (558 aa).

An N-acetylalanine modification is found at alanine 2. Residue lysine 12 is modified to N6-acetyllysine. The residue at position 34 (lysine 34) is an N6-(2-hydroxyisobutyryl)lysine. Residue serine 107 is modified to Phosphoserine. Phosphothreonine is present on threonine 109. Lysine 142 is subject to N6-acetyllysine. D-glucose 6-phosphate is bound at residue 159–160 (GS). At serine 185 the chain carries Phosphoserine; by CK2. D-glucose 6-phosphate is bound at residue 210 to 215 (SKTFTT). Threonine 250 is modified (phosphothreonine). D-glucose 6-phosphate is bound by residues glutamine 354, glutamate 358, and histidine 389. The active-site Proton donor is the glutamate 358. Histidine 389 is an active-site residue. Position 454 is an N6-acetyllysine; alternate (lysine 454). Lysine 454 carries the post-translational modification N6-malonyllysine; alternate. At lysine 454 the chain carries N6-succinyllysine; alternate. A Phosphoserine modification is found at serine 455. Lysine 519 serves as a coordination point for D-glucose 6-phosphate. Lysine 519 is an active-site residue.

The protein belongs to the GPI family. Homodimer; in the catalytically active form. Monomer in the secreted form. Phosphorylation at Ser-185 by CK2 has been shown to decrease enzymatic activity and may contribute to secretion by a non-classical secretory pathway. In terms of processing, ISGylated.

The protein localises to the cytoplasm. It localises to the secreted. The catalysed reaction is alpha-D-glucose 6-phosphate = beta-D-fructose 6-phosphate. Its pathway is carbohydrate degradation; glycolysis; D-glyceraldehyde 3-phosphate and glycerone phosphate from D-glucose: step 2/4. Its function is as follows. In the cytoplasm, catalyzes the conversion of glucose-6-phosphate to fructose-6-phosphate, the second step in glycolysis, and the reverse reaction during gluconeogenesis. Besides it's role as a glycolytic enzyme, also acts as a secreted cytokine: acts as an angiogenic factor (AMF) that stimulates endothelial cell motility. Acts as a neurotrophic factor, neuroleukin, for spinal and sensory neurons. It is secreted by lectin-stimulated T-cells and induces immunoglobulin secretion. The chain is Glucose-6-phosphate isomerase from Pongo abelii (Sumatran orangutan).